Here is a 474-residue protein sequence, read N- to C-terminus: Serine--tRNA ligase (474 aa).

T278–E280 is a binding site for L-serine. R309 to E311 contributes to the ATP binding site. E332 contacts L-serine. An ATP-binding site is contributed by E396 to S399. S432 is a binding site for L-serine.

It belongs to the class-II aminoacyl-tRNA synthetase family. Type-1 seryl-tRNA synthetase subfamily. In terms of assembly, homodimer. The tRNA molecule binds across the dimer.

It localises to the cytoplasm. The catalysed reaction is tRNA(Ser) + L-serine + ATP = L-seryl-tRNA(Ser) + AMP + diphosphate + H(+). The enzyme catalyses tRNA(Sec) + L-serine + ATP = L-seryl-tRNA(Sec) + AMP + diphosphate + H(+). Its pathway is aminoacyl-tRNA biosynthesis; selenocysteinyl-tRNA(Sec) biosynthesis; L-seryl-tRNA(Sec) from L-serine and tRNA(Sec): step 1/1. Functionally, catalyzes the attachment of serine to tRNA(Ser). Is also able to aminoacylate tRNA(Sec) with serine, to form the misacylated tRNA L-seryl-tRNA(Sec), which will be further converted into selenocysteinyl-tRNA(Sec). This chain is Serine--tRNA ligase, found in Caulobacter sp. (strain K31).